The chain runs to 323 residues: Aspartate carbamoyltransferase catalytic subunit (323 aa).

Carbamoyl phosphate-binding residues include Arg-68 and Thr-69. Position 96 (Lys-96) interacts with L-aspartate. Arg-118, His-148, and Gln-151 together coordinate carbamoyl phosphate. L-aspartate is bound by residues Arg-181 and Arg-236. Carbamoyl phosphate contacts are provided by Gly-277 and Pro-278.

Belongs to the aspartate/ornithine carbamoyltransferase superfamily. ATCase family. As to quaternary structure, heterododecamer (2C3:3R2) of six catalytic PyrB chains organized as two trimers (C3), and six regulatory PyrI chains organized as three dimers (R2).

It carries out the reaction carbamoyl phosphate + L-aspartate = N-carbamoyl-L-aspartate + phosphate + H(+). Its pathway is pyrimidine metabolism; UMP biosynthesis via de novo pathway; (S)-dihydroorotate from bicarbonate: step 2/3. Catalyzes the condensation of carbamoyl phosphate and aspartate to form carbamoyl aspartate and inorganic phosphate, the committed step in the de novo pyrimidine nucleotide biosynthesis pathway. This Verminephrobacter eiseniae (strain EF01-2) protein is Aspartate carbamoyltransferase catalytic subunit.